Consider the following 256-residue polypeptide: Pimeloyl-[acyl-carrier protein] methyl ester esterase (256 aa).

Residues 15–242 (HLVLLHGWGL…AAHAPFISHP (228 aa)) enclose the AB hydrolase-1 domain. Substrate contacts are provided by residues Trp-22, 82-83 (SL), and 143-147 (FLALQ). The Nucleophile role is filled by Ser-82. Residues Asp-207 and His-235 contribute to the active site. His-235 is a substrate binding site.

The protein belongs to the AB hydrolase superfamily. Carboxylesterase BioH family. In terms of assembly, monomer.

It localises to the cytoplasm. It catalyses the reaction 6-carboxyhexanoyl-[ACP] methyl ester + H2O = 6-carboxyhexanoyl-[ACP] + methanol + H(+). Its pathway is cofactor biosynthesis; biotin biosynthesis. Functionally, the physiological role of BioH is to remove the methyl group introduced by BioC when the pimeloyl moiety is complete. It allows to synthesize pimeloyl-ACP via the fatty acid synthetic pathway through the hydrolysis of the ester bonds of pimeloyl-ACP esters. This Escherichia coli O139:H28 (strain E24377A / ETEC) protein is Pimeloyl-[acyl-carrier protein] methyl ester esterase.